A 296-amino-acid polypeptide reads, in one-letter code: Acetylglutamate kinase (296 aa).

Substrate-binding positions include 67–68, arginine 89, and asparagine 194; that span reads GG.

The protein belongs to the acetylglutamate kinase family. ArgB subfamily.

Its subcellular location is the cytoplasm. It catalyses the reaction N-acetyl-L-glutamate + ATP = N-acetyl-L-glutamyl 5-phosphate + ADP. Its pathway is amino-acid biosynthesis; L-arginine biosynthesis; N(2)-acetyl-L-ornithine from L-glutamate: step 2/4. In terms of biological role, catalyzes the ATP-dependent phosphorylation of N-acetyl-L-glutamate. In Brucella abortus (strain S19), this protein is Acetylglutamate kinase.